The sequence spans 294 residues: Cytidine deaminase (294 aa).

2 CMP/dCMP-type deaminase domains span residues 48–168 (DEDA…FGPK) and 186–294 (LTGD…VLLA). 89–91 (NME) contacts substrate. H102 contributes to the Zn(2+) binding site. The active-site Proton donor is E104. Zn(2+) is bound by residues C129 and C132.

It belongs to the cytidine and deoxycytidylate deaminase family. In terms of assembly, homodimer. Zn(2+) serves as cofactor.

It catalyses the reaction cytidine + H2O + H(+) = uridine + NH4(+). The enzyme catalyses 2'-deoxycytidine + H2O + H(+) = 2'-deoxyuridine + NH4(+). Its function is as follows. This enzyme scavenges exogenous and endogenous cytidine and 2'-deoxycytidine for UMP synthesis. The polypeptide is Cytidine deaminase (Escherichia coli O139:H28 (strain E24377A / ETEC)).